Here is a 37-residue protein sequence, read N- to C-terminus: Large ribosomal subunit protein bL36c (37 aa).

The protein belongs to the bacterial ribosomal protein bL36 family.

It localises to the plastid. Its subcellular location is the chloroplast. The sequence is that of Large ribosomal subunit protein bL36c from Cucumis sativus (Cucumber).